The chain runs to 784 residues: Toll-like receptor 2 (784 aa).

The signal sequence occupies residues Met1–Gly20. Residues Ala21–Arg587 lie on the Extracellular side of the membrane. Cysteines 30 and 36 form a disulfide. LRR repeat units follow at residues Val54 to Asn77, Leu78 to Asn101, Leu102 to Val125, Leu126 to Asn150, Leu151 to Phe175, Leu176 to Asn199, Ile200 to Ser223, Leu224 to Ser250, Val251 to Gly278, Ile279 to Asn308, Val309 to Lys337, Val338 to Ser361, Leu362 to Val388, Leu389 to Asn414, Leu415 to Lys437, Met438 to Gln457, Thr458 to Gln478, Leu479 to Val500, and Leu501 to Gln524. N-linked (GlcNAc...) asparagine glycosylation is present at Asn114. Asn199 carries N-linked (GlcNAc...) asparagine glycosylation. Asn248 carries an N-linked (GlcNAc...) asparagine glycan. A disulfide bridge links Cys353 with Cys382. A disulfide bridge connects residues Cys432 and Cys454. N-linked (GlcNAc...) asparagine glycosylation occurs at Asn442. Positions Leu525–Arg579 constitute an LRRCT domain. A helical membrane pass occupies residues Ala588–Leu608. Over Cys609–Ser784 the chain is Cytoplasmic. A TIR domain is found at Leu639–Ile782. Lys754 participates in a covalent cross-link: Glycyl lysine isopeptide (Lys-Gly) (interchain with G-Cter in ubiquitin). Residues Tyr761 to Leu778 carry the ATG16L1-binding motif motif.

It belongs to the Toll-like receptor family. In terms of assembly, interacts with LY96, TLR1 and TLR6 (via extracellular domain). TLR2 seems to exist in heterodimers with either TLR1 or TLR6 before stimulation by the ligand. The heterodimers form bigger oligomers in response to their corresponding ligands as well as further heterotypic associations with other receptors such as CD14 and/or CD36. Binds MYD88 (via TIR domain). Interacts with TICAM1. Interacts with CNPY3. Interacts with ATG16L1. Interacts with PPP1R11. Interacts with TICAM2. Interacts with TIRAP. Post-translationally, ubiquitinated at Lys-754 by PPP1R11, leading to its degradation. Deubiquitinated by USP2. Glycosylation of Asn-442 is critical for secretion of the N-terminal ectodomain of TLR2.

The protein localises to the membrane. The protein resides in the cytoplasmic vesicle. Its subcellular location is the phagosome membrane. It localises to the membrane raft. Its function is as follows. Cooperates with LY96 to mediate the innate immune response to bacterial lipoproteins and other microbial cell wall components. Cooperates with TLR1 or TLR6 to mediate the innate immune response to bacterial lipoproteins or lipopeptides. Acts via MYD88 and TRAF6, leading to NF-kappa-B activation, cytokine secretion and the inflammatory response. May also promote apoptosis in response to lipoproteins. Forms activation clusters composed of several receptors depending on the ligand, these clusters trigger signaling from the cell surface and subsequently are targeted to the Golgi in a lipid-raft dependent pathway. Forms the cluster TLR2:TLR6:CD14:CD36 in response to diacylated lipopeptides and TLR2:TLR1:CD14 in response to triacylated lipopeptides. This is Toll-like receptor 2 (TLR2) from Ovis aries (Sheep).